Consider the following 237-residue polypeptide: Orotidine 5'-phosphate decarboxylase (237 aa).

Substrate contacts are provided by residues Asp-17, Lys-39, 66-75, Thr-121, Arg-182, Gln-191, Gly-211, and Arg-212; that span reads DLKLHDIGNT. Catalysis depends on Lys-68, which acts as the Proton donor.

The protein belongs to the OMP decarboxylase family. Type 1 subfamily. As to quaternary structure, homodimer.

The catalysed reaction is orotidine 5'-phosphate + H(+) = UMP + CO2. It participates in pyrimidine metabolism; UMP biosynthesis via de novo pathway; UMP from orotate: step 2/2. Functionally, catalyzes the decarboxylation of orotidine 5'-monophosphate (OMP) to uridine 5'-monophosphate (UMP). This chain is Orotidine 5'-phosphate decarboxylase, found in Bradyrhizobium diazoefficiens (strain JCM 10833 / BCRC 13528 / IAM 13628 / NBRC 14792 / USDA 110).